A 115-amino-acid polypeptide reads, in one-letter code: Hydrogenase maturation factor HypA (115 aa).

A Ni(2+)-binding site is contributed by H2. The Zn(2+) site is built by C73, C76, C89, and C92.

Belongs to the HypA/HybF family.

Functionally, involved in the maturation of [NiFe] hydrogenases. Required for nickel insertion into the metal center of the hydrogenase. This chain is Hydrogenase maturation factor HypA, found in Parabacteroides distasonis (strain ATCC 8503 / DSM 20701 / CIP 104284 / JCM 5825 / NCTC 11152).